Consider the following 331-residue polypeptide: tRNA N6-adenosine threonylcarbamoyltransferase (331 aa).

Residues His109, His113, and Tyr130 each coordinate Fe cation. Substrate is bound by residues 130–134 (YLSGG), Asp162, Asp183, and Ser262. Asp290 provides a ligand contact to Fe cation.

This sequence belongs to the KAE1 / TsaD family. Fe(2+) serves as cofactor.

It is found in the cytoplasm. It catalyses the reaction L-threonylcarbamoyladenylate + adenosine(37) in tRNA = N(6)-L-threonylcarbamoyladenosine(37) in tRNA + AMP + H(+). Required for the formation of a threonylcarbamoyl group on adenosine at position 37 (t(6)A37) in tRNAs that read codons beginning with adenine. Is probably involved in the transfer of the threonylcarbamoyl moiety of threonylcarbamoyl-AMP (TC-AMP) to the N6 group of A37. This is tRNA N6-adenosine threonylcarbamoyltransferase from Saccharolobus islandicus (strain Y.G.57.14 / Yellowstone #1) (Sulfolobus islandicus).